Reading from the N-terminus, the 408-residue chain is Large ribosomal subunit protein uL4 (408 aa).

The disordered stretch occupies residues P58–A98.

This sequence belongs to the universal ribosomal protein uL4 family.

The polypeptide is Large ribosomal subunit protein uL4 (RPL4) (Prunus armeniaca (Apricot)).